The sequence spans 962 residues: Ubiquitin carboxyl-terminal hydrolase 4 (962 aa).

The DUSP domain occupies 11–122 (PDVETQKTEL…GQQPIVRKVV (112 aa)). The segment at 27-216 (TLQRGAQWYL…LYQGQVLVIE (190 aa)) is necessary for interaction with SART3. The Nuclear export signal motif lies at 133–141 (VEVYLLELK). The Ubiquitin-like 1 domain occupies 142–226 (LCENSDPTNV…PQNEDGTWPR (85 aa)). Residues 220–249 (EDGTWPRQSLQSKSSTAPSRNFTTSSKPSA) are disordered. Positions 225-249 (PRQSLQSKSSTAPSRNFTTSSKPSA) are enriched in polar residues. The interval 229 to 295 (LQSKSSTAPS…SYNCQEPPSP (67 aa)) is required for USP4 activation by providing conformational flexibility between the DUSP and catalytic domains. A USP domain is found at 302 to 922 (CGLGNLGNTC…AAYVLFYQRR (621 aa)). The active-site Nucleophile is the Cys311. Positions 384–386 (PQF) are regulates ubiquitin dissociation. A necessary for interaction with RBL2 region spans residues 405–407 (LHE). A Phosphoserine modification is found at Ser445. A necessary for interaction with RB1 and RBL2 region spans residues 459-463 (LVCPE). Zn(2+) is bound by residues Cys461 and Cys464. Residues 483 to 571 (LKKDRIMEVF…IFVYEVCNTS (89 aa)) enclose the Ubiquitin-like 2 domain. The interacts with DUSP and ubiquitin-like 1 domains and is required for USP4 activation stretch occupies residues 485–774 (KDRIMEVFLV…SQPQKKKKAA (290 aa)). Positions 638-699 (EFLSSPLEPG…SESAQKVKGQ (62 aa)) are disordered. Ser655 carries the phosphoserine modification. A compositionally biased stretch (acidic residues) spans 657–666 (EGDEEEEMDH). Ser675 and Ser680 each carry phosphoserine. The Nuclear localization signal signature appears at 766 to 771 (QPQKKK). Zn(2+) is bound by residues Cys798 and Cys801. The Proton acceptor role is filled by His880. Residues 928-937 (STSSLGSFPG) show a composition bias toward low complexity. A disordered region spans residues 928–962 (STSSLGSFPGSDGGVKLSSSHQGMGDEEAYNMDTN). Acidic residues predominate over residues 952–962 (GDEEAYNMDTN).

Belongs to the peptidase C19 family. USP4 subfamily. In terms of assembly, interacts with RB1 (both dephosphorylated and hypophosphorylated forms). Interacts with RBL1 and RBL2. Interacts with ADORA2A (via cytoplasmic C-terminus); the interaction is direct. Interacts with SART3; recruits USP4 to its substrate PRPF3. Post-translationally, phosphorylated at Ser-445 by PKB/AKT1 in response to EGF stimulus, promoting its ability deubiquitinate RHEB. In terms of processing, monoubiquitinated by TRIM21. Ubiquitination does not lead to its proteasomal degradation. Autodeubiquitinated. Expressed in brain, kidney, liver and spleen (at protein level).

The protein resides in the cytoplasm. Its subcellular location is the nucleus. It catalyses the reaction Thiol-dependent hydrolysis of ester, thioester, amide, peptide and isopeptide bonds formed by the C-terminal Gly of ubiquitin (a 76-residue protein attached to proteins as an intracellular targeting signal).. The completion of the deubiquitinase reaction is mediated by the DUSP and ubiquitin-like 1 domains which promotes the release of ubiquitin from the catalytic site enabling subsequent reactions to occur. Its function is as follows. Deubiquitinating enzyme that removes conjugated ubiquitin from target proteins. Deubiquitinates PDPK1. Deubiquitinates TRIM21. Deubiquitinates receptor ADORA2A which increases the amount of functional receptor at the cell surface. Deubiquitinates HAS2. Deubiquitinates RHEB in response to EGF signaling, promoting mTORC1 signaling. May regulate mRNA splicing through deubiquitination of the U4 spliceosomal protein PRPF3. This may prevent its recognition by the U5 component PRPF8 thereby destabilizing interactions within the U4/U6.U5 snRNP. May also play a role in the regulation of quality control in the ER. This is Ubiquitin carboxyl-terminal hydrolase 4 (Usp4) from Mus musculus (Mouse).